We begin with the raw amino-acid sequence, 441 residues long: Cysteine--tRNA ligase (441 aa).

Cysteine 24 provides a ligand contact to Zn(2+). A 'HIGH' region motif is present at residues 26–36 (PTIYDYIHIGN). Zn(2+)-binding residues include cysteine 204, histidine 230, and glutamate 234. The short motif at 262 to 266 (KMSKS) is the 'KMSKS' region element. ATP is bound at residue lysine 265.

Belongs to the class-I aminoacyl-tRNA synthetase family. As to quaternary structure, monomer. It depends on Zn(2+) as a cofactor.

The protein localises to the cytoplasm. It carries out the reaction tRNA(Cys) + L-cysteine + ATP = L-cysteinyl-tRNA(Cys) + AMP + diphosphate. In Mesoplasma florum (strain ATCC 33453 / NBRC 100688 / NCTC 11704 / L1) (Acholeplasma florum), this protein is Cysteine--tRNA ligase.